The following is a 421-amino-acid chain: Gamma-glutamyl phosphate reductase (421 aa).

It belongs to the gamma-glutamyl phosphate reductase family.

Its subcellular location is the cytoplasm. It catalyses the reaction L-glutamate 5-semialdehyde + phosphate + NADP(+) = L-glutamyl 5-phosphate + NADPH + H(+). It functions in the pathway amino-acid biosynthesis; L-proline biosynthesis; L-glutamate 5-semialdehyde from L-glutamate: step 2/2. Functionally, catalyzes the NADPH-dependent reduction of L-glutamate 5-phosphate into L-glutamate 5-semialdehyde and phosphate. The product spontaneously undergoes cyclization to form 1-pyrroline-5-carboxylate. This Acinetobacter baumannii (strain ATCC 17978 / DSM 105126 / CIP 53.77 / LMG 1025 / NCDC KC755 / 5377) protein is Gamma-glutamyl phosphate reductase.